A 337-amino-acid polypeptide reads, in one-letter code: Replication-associated protein (337 aa).

A CRESS-DNA virus Rep endonuclease domain is found at 12–114; it reads RLQTKYVFLT…DGNVITKGEF (103 aa). The RCR-1 motif lies at 19–22; the sequence is FLTY. Positions 53, 61, and 63 each coordinate a divalent metal cation. An RCR-2 motif is present at residues 61–63; it reads HLH. Tyr101 functions as the For DNA cleavage activity in the catalytic mechanism. An RCR-3 motif is present at residues 101 to 104; sequence YISK. Asp105 is an a divalent metal cation binding site. The interval 163-175 is oligomerization; that stretch reads SANKLFPPQPEIY. 216-223 is an ATP binding site; the sequence is GPSRTGKT. A transactivation region spans residues 239-257; sequence IDFTVYDDHATYNVIDDIP. The Nuclear localization signal signature appears at 279–289; it reads KYGKKKKIKGG.

Belongs to the geminiviridae Rep protein family. In terms of assembly, homooligomer. Rep binds to repeated DNA motifs (iterons). Forms the O-complex, which is a Rep-DNA complex involved in the initiation of RCR. Part of the C- and V-complexes which are RepA-Rep-DNA complexes involved in the c-sense and v-sense transcription. It depends on Mg(2+) as a cofactor. The cofactor is Mn(2+).

The protein localises to the host nucleus. Functionally, essential for the replication of viral ssDNA. The closed circular ssDNA genome is first converted to a superhelical dsDNA. Rep binds a specific region at the genome origin of replication. It introduces an endonucleolytic nick within the conserved sequence 5'-TAATATTAC-3' in the intergenic region of the genome present in all geminiviruses, thereby initiating the rolling circle replication (RCR). Following cleavage, binds covalently to the 5'-phosphate of DNA as a tyrosyl ester. The cleavage gives rise to a free 3'-OH that serves as a primer for the cellular DNA polymerase. The polymerase synthesizes the (+) strand DNA by rolling circle mechanism. After one round of replication, a Rep-catalyzed nucleotidyl transfer reaction releases a circular single-stranded virus genome, thereby terminating the replication. Displays origin-specific DNA cleavage, nucleotidyl transferase, ATPase and helicase activities. Acts as an inhibitor of C-sense gene transcription. In Tobacco yellow dwarf virus (strain Australia) (TYDV), this protein is Replication-associated protein.